Reading from the N-terminus, the 211-residue chain is MLTIALSKGRILDDTLPLLAAAGIEPTENPDKSRKLIIPTTQDDVRLLIVRATDVPTYVEHGAADLGVAGKDVLMEYGGQGLYEPLDLQIAKCKLMTAGKVGAPEPKGRLRVATKFVNVAKRYYAEQGRQVDIIKLYGSMELAPLVGLADKIIDVVDTGNTLRANGLEPQELIATISSRLIVNKASMKMQHGRIQALIETLRGAVEARHQG.

The protein belongs to the ATP phosphoribosyltransferase family. Short subfamily. In terms of assembly, heteromultimer composed of HisG and HisZ subunits.

It is found in the cytoplasm. The catalysed reaction is 1-(5-phospho-beta-D-ribosyl)-ATP + diphosphate = 5-phospho-alpha-D-ribose 1-diphosphate + ATP. It functions in the pathway amino-acid biosynthesis; L-histidine biosynthesis; L-histidine from 5-phospho-alpha-D-ribose 1-diphosphate: step 1/9. In terms of biological role, catalyzes the condensation of ATP and 5-phosphoribose 1-diphosphate to form N'-(5'-phosphoribosyl)-ATP (PR-ATP). Has a crucial role in the pathway because the rate of histidine biosynthesis seems to be controlled primarily by regulation of HisG enzymatic activity. This chain is ATP phosphoribosyltransferase, found in Ectopseudomonas mendocina (strain ymp) (Pseudomonas mendocina).